The following is a 208-amino-acid chain: Thymidylate kinase (208 aa).

Residue 10-17 (GGEGVGKS) coordinates ATP.

Belongs to the thymidylate kinase family.

It catalyses the reaction dTMP + ATP = dTDP + ADP. In terms of biological role, phosphorylation of dTMP to form dTDP in both de novo and salvage pathways of dTTP synthesis. The protein is Thymidylate kinase of Rhizorhabdus wittichii (strain DSM 6014 / CCUG 31198 / JCM 15750 / NBRC 105917 / EY 4224 / RW1) (Sphingomonas wittichii).